Here is a 603-residue protein sequence, read N- to C-terminus: MNAAAKAGKLARAPADLGKGGVPGDAVPGAPVAAPLAKEIPEVLVDPRSRRQYVRGRFLGKGGFAKCFEISDADTKEVFAGKIVPKSLLLKPHQKEKMSMEISIHRSLAHQHVVGFHDFFEDSDFVFVVLELCRRRSLLELHKRRKALTEPEARYYLRQIVLGCQYLHRNQVIHRDLKLGNLFLNEDLEVKIGDFGLATKVEYEGERKKTLCGTPNYIAPEVLSKKGHSFEVDVWSIGCIMYTLLVGKPPFETSCLKETYLRIKKNEYSIPKHINPVAASLIQKMLQTDPTARPTIHELLNDEFFTSGYIPARLPITCLTIPPRFSIAPSSLDPSSRKPLKVLNKGVENPLPDRPREKEEPVVRETNEAIECHLSDLLQQLTSVNASKPSERGLVRQEEAEDPACIPIFWVSKWVDYSDKYGLGYQLCDNSVGVLFNDSTRLILYNDGDSLQYIERDGTESYLTVSSHPNSLMKKITLLNYFRNYMSEHLLKAGANITPREGDELARLPYLRTWFRTRSAIILHLSNGTVQINFFQDHTKLILCPLMAAVTYINEKRDFQTYRLSLLEEYGCCKELASRLRYARTMVDKLLSSRSASNRLKAS.

A Glycyl lysine isopeptide (Lys-Gly) (interchain with G-Cter in ubiquitin) cross-link involves residue Lys19. Positions 53-305 (YVRGRFLGKG…IHELLNDEFF (253 aa)) constitute a Protein kinase domain. ATP-binding positions include 59–67 (LGKGGFAKC) and Lys82. A Phosphoserine modification is found at Ser103. Glu131 contributes to the ATP binding site. The residue at position 137 (Ser137) is a Phosphoserine. Asp176 (proton acceptor) is an active-site residue. ATP-binding positions include 178–181 (KLGN) and Asp194. The interval 194–221 (DFGLATKVEYEGERKKTLCGTPNYIAPE) is activation loop. Thr210 carries the post-translational modification Phosphothreonine; by AURKA. Residue Thr214 is modified to Phosphothreonine. A phosphoserine; by autocatalysis mark is found at Ser269 and Ser335. The D-box that targets the protein for proteasomal degradation in anaphase motif lies at 337–340 (RKPL). Lys338 participates in a covalent cross-link: Glycyl lysine isopeptide (Lys-Gly) (interchain with G-Cter in SUMO2). Residues Ser375 and Ser450 each carry the phosphoserine modification. The 79-residue stretch at 410–488 (WVSKWVDYSD…LNYFRNYMSE (79 aa)) folds into the POLO box 1 domain. Lys492 participates in a covalent cross-link: Glycyl lysine isopeptide (Lys-Gly) (interchain with G-Cter in ubiquitin). Positions 493–507 (AGANITPREGDELAR) are linker. Thr498 is subject to Phosphothreonine. The 83-residue stretch at 510-592 (YLRTWFRTRS…ARTMVDKLLS (83 aa)) folds into the POLO box 2 domain. The interval 538 to 540 (HTK) is important for interaction with phosphorylated proteins.

The protein belongs to the protein kinase superfamily. Ser/Thr protein kinase family. CDC5/Polo subfamily. As to quaternary structure, interacts with CEP170 and EVI5. Interacts and phosphorylates ERCC6L. Interacts with FAM29A. Interacts with SLX4/BTBD12 and TTDN1. Interacts with BUB1B. Interacts (via POLO-box domain) with the phosphorylated form of BUB1, CENPU and CDC25C. Interacts with isoform 3 of SGO1. Interacts with BORA, KIF2A and AURKA. Interacts with TOPORS and CYLD. Interacts with ECT2; the interaction is stimulated upon phosphorylation of ECT2 on 'Thr-444'. Interacts with PRC1. Interacts with KIF20A/MKLP2 (when phosphorylated), leading to the recruitment at the central spindle. Interacts (via POLO box domains) with PPP1R12A/MYPT1 (when previously phosphorylated by CDK1). Part of an astrin (SPAG5)-kinastrin (SKAP) complex containing KNSTRN, SPAG5, PLK1, DYNLL1 and SGO2A. Interacts with BIRC6/bruce. Interacts with CDK1-phosphorylated DCTN6 during mitotic prometaphase; the interaction facilitates recruitment to kinetochores. Interacts with CDK1-phosphorylated FRY; this interaction occurs in mitotic cells, but not in interphase cells. FRY interaction facilitates AURKA-mediated PLK1 phosphorylation. Interacts with CEP68; the interaction phosphorylates CEP68. Interacts (via POLO-box domain) with DCTN1. Interacts with CEP20 in later G1, S, G2 and M phases of the cell cycle; this interaction recruits PLK1 to centrosomes, a step required for S phase progression. Interacts with HSF1; this interaction increases upon heat shock but does not modulate neither HSF1 homotrimerization nor DNA-binding activities. Interacts with HNRNPU; this interaction induces phosphorylation of HNRNPU in mitosis. Interacts (via its N-terminus) with RIOK2. Interacts with KLHL22. Interacts (via POLO box domains) with NEDD9/HEF1 (via C-terminus). Interacts (via RVxF motif) with FIRRM; regulates PLK1 kinase activity. Interacts with SKA3; the interaction promotes the stability of PLK1. Interacts with the MTMR3:MTMR4 heterooligomer; brings CEP55 and PLK1 together during early mitosis, regulating the phosphorylation of CEP55 by PLK1 and its recruitment to the midbody where it can mediate cell abscission. Post-translationally, catalytic activity is enhanced by phosphorylation of Thr-210. Phosphorylation at Thr-210 is first detected on centrosomes in the G2 phase of the cell cycle, peaks in prometaphase and gradually disappears from centrosomes during anaphase. Dephosphorylation at Thr-210 at centrosomes is probably mediated by protein phosphatase 1C (PP1C), via interaction with PPP1R12A/MYPT1. Autophosphorylation and phosphorylation of Ser-137 may not be significant for the activation of PLK1 during mitosis, but may enhance catalytic activity during recovery after DNA damage checkpoint. Phosphorylated in vitro by STK10. Ubiquitinated by the anaphase promoting complex/cyclosome (APC/C) in anaphase and following DNA damage, leading to its degradation by the proteasome. Ubiquitination is mediated via its interaction with FZR1/CDH1. Ubiquitination and subsequent degradation prevents entry into mitosis and is essential to maintain an efficient G2 DNA damage checkpoint. Monoubiquitination at Lys-492 by the BCR(KLHL22) ubiquitin ligase complex does not lead to degradation: it promotes PLK1 dissociation from phosphoreceptor proteins and subsequent removal from kinetochores, allowing silencing of the spindle assembly checkpoint (SAC) and chromosome segregation. Newborn and adult spleen, fetal and newborn kidney, liver, brain, thymus and adult bone marrow, thymus, ovary and testes.

It localises to the nucleus. The protein resides in the chromosome. It is found in the centromere. Its subcellular location is the kinetochore. The protein localises to the cytoplasm. It localises to the cytoskeleton. The protein resides in the microtubule organizing center. It is found in the centrosome. Its subcellular location is the spindle. The protein localises to the midbody. It carries out the reaction L-seryl-[protein] + ATP = O-phospho-L-seryl-[protein] + ADP + H(+). The catalysed reaction is L-threonyl-[protein] + ATP = O-phospho-L-threonyl-[protein] + ADP + H(+). With respect to regulation, activated by phosphorylation of Thr-210 by AURKA; phosphorylation by AURKA is enhanced by BORA. Once activated, activity is stimulated by binding target proteins. Binding of target proteins has no effect on the non-activated kinase. Several inhibitors targeting PLKs are currently in development and are under investigation in a growing number of clinical trials, such as BI 2536, an ATP-competitive PLK1 inhibitor or BI 6727, a dihydropteridinone that specifically inhibits the catalytic activity of PLK1. Serine/threonine-protein kinase that performs several important functions throughout M phase of the cell cycle, including the regulation of centrosome maturation and spindle assembly, the removal of cohesins from chromosome arms, the inactivation of anaphase-promoting complex/cyclosome (APC/C) inhibitors, and the regulation of mitotic exit and cytokinesis. Polo-like kinase proteins act by binding and phosphorylating proteins that are already phosphorylated on a specific motif recognized by the POLO box domains. Phosphorylates BORA, BUB1B/BUBR1, CCNB1, CDC25C, CEP55, ECT2, ERCC6L, FBXO5/EMI1, FOXM1, KIF20A/MKLP2, CENPU, NEDD1, NINL, NPM1, NUDC, PKMYT1/MYT1, KIZ, MRE11, PPP1R12A/MYPT1, POLQ, PRC1, RACGAP1/CYK4, RAD51, RHNO1, SGO1, STAG2/SA2, TEX14, TOPORS, p73/TP73, TPT1, WEE1 and HNRNPU. Plays a key role in centrosome functions and the assembly of bipolar spindles by phosphorylating KIZ, NEDD1 and NINL. NEDD1 phosphorylation promotes subsequent targeting of the gamma-tubulin ring complex (gTuRC) to the centrosome, an important step for spindle formation. Phosphorylation of NINL component of the centrosome leads to NINL dissociation from other centrosomal proteins. Involved in mitosis exit and cytokinesis by phosphorylating CEP55, ECT2, KIF20A/MKLP2, CENPU, PRC1 and RACGAP1. Recruited at the central spindle by phosphorylating and docking PRC1 and KIF20A/MKLP2; creates its own docking sites on PRC1 and KIF20A/MKLP2 by mediating phosphorylation of sites subsequently recognized by the POLO box domains. Phosphorylates RACGAP1, thereby creating a docking site for the Rho GTP exchange factor ECT2 that is essential for the cleavage furrow formation. Promotes the central spindle recruitment of ECT2. Plays a central role in G2/M transition of mitotic cell cycle by phosphorylating CCNB1, CDC25C, FOXM1, CENPU, PKMYT1/MYT1, PPP1R12A/MYPT1 and WEE1. Part of a regulatory circuit that promotes the activation of CDK1 by phosphorylating the positive regulator CDC25C and inhibiting the negative regulators WEE1 and PKMYT1/MYT1. Also acts by mediating phosphorylation of cyclin-B1 (CCNB1) on centrosomes in prophase. Phosphorylates FOXM1, a key mitotic transcription regulator, leading to enhance FOXM1 transcriptional activity. Involved in kinetochore functions and sister chromatid cohesion by phosphorylating BUB1B/BUBR1, FBXO5/EMI1 and STAG2/SA2. PLK1 is high on non-attached kinetochores suggesting a role of PLK1 in kinetochore attachment or in spindle assembly checkpoint (SAC) regulation. Required for kinetochore localization of BUB1B. Regulates the dissociation of cohesin from chromosomes by phosphorylating cohesin subunits such as STAG2/SA2. Phosphorylates SGO1: required for spindle pole localization of isoform 3 of SGO1 and plays a role in regulating its centriole cohesion function. Mediates phosphorylation of FBXO5/EMI1, a negative regulator of the APC/C complex during prophase, leading to FBXO5/EMI1 ubiquitination and degradation by the proteasome. Acts as a negative regulator of p53 family members: phosphorylates TOPORS, leading to inhibit the sumoylation of p53/TP53 and simultaneously enhance the ubiquitination and subsequent degradation of p53/TP53. Phosphorylates the transactivation domain of the transcription factor p73/TP73, leading to inhibit p73/TP73-mediated transcriptional activation and pro-apoptotic functions. Phosphorylates BORA, and thereby promotes the degradation of BORA. Contributes to the regulation of AURKA function. Also required for recovery after DNA damage checkpoint and entry into mitosis. Phosphorylates MISP, leading to stabilization of cortical and astral microtubule attachments required for proper spindle positioning. Together with MEIKIN, acts as a regulator of kinetochore function during meiosis I: required both for mono-orientation of kinetochores on sister chromosomes and protection of centromeric cohesin from separase-mediated cleavage. Phosphorylates CEP68 and is required for its degradation. Regulates nuclear envelope breakdown during prophase by phosphorylating DCTN1 resulting in its localization in the nuclear envelope. Phosphorylates the heat shock transcription factor HSF1, promoting HSF1 nuclear translocation upon heat shock. Phosphorylates HSF1 also in the early mitotic period; this phosphorylation regulates HSF1 localization to the spindle pole, the recruitment of the SCF(BTRC) ubiquitin ligase complex induicing HSF1 degradation, and hence mitotic progression. Regulates mitotic progression by phosphorylating RIOK2. Through the phosphorylation of DZIP1 regulates the localization during mitosis of the BBSome, a ciliary protein complex involved in cilium biogenesis. Regulates DNA repair during mitosis by mediating phosphorylation of POLQ and RHNO1, thereby promoting POLQ recruitment to DNA damage sites. Phosphorylates ATXN10 which may play a role in the regulation of cytokinesis and may stimulate the proteasome-mediated degradation of ATXN10. The polypeptide is Serine/threonine-protein kinase PLK1 (Plk1) (Mus musculus (Mouse)).